The primary structure comprises 156 residues: Small ribosomal subunit protein uS7c (156 aa).

This sequence belongs to the universal ribosomal protein uS7 family. In terms of assembly, part of the 30S ribosomal subunit.

The protein resides in the plastid. The protein localises to the chloroplast. In terms of biological role, one of the primary rRNA binding proteins, it binds directly to 16S rRNA where it nucleates assembly of the head domain of the 30S subunit. This Zamia furfuracea (Cardboard cycad) protein is Small ribosomal subunit protein uS7c (rps7).